The primary structure comprises 517 residues: Shugoshin 1 (517 aa).

Residues Met-1 to Cys-89 are a coiled coil. Positions Met-1 to Thr-176 are necessary for interaction with PPP2CA and PPP2R1A. Disordered regions lie at residues Gln-107–Lys-136, Pro-149–Val-173, Pro-267–Gly-317, and His-334–Pro-427. A coiled-coil region spans residues Glu-268 to Cys-291. Residues Lys-273–Asn-302 are compositionally biased toward basic residues. Polar residues predominate over residues Lys-341–Ser-363. The span at Arg-379–Val-390 shows a compositional bias: basic and acidic residues. At Ser-426 the chain carries Phosphoserine. A PXVXL/I motif motif is present at residues Pro-441–Ile-445. The D-box signature appears at Lys-447 to Arg-455. Residue Ser-497 is modified to Phosphoserine; by NEK2.

Belongs to the shugoshin family. In terms of assembly, interacts with PPP2CA (or PPP2CB), PPP2R1B, PPP2R5A, PPP2R5B, PPP2R5C, PPP2R5D, PPP2R5E, SET, LRRC59, RBM10 (or RBM5), RPL10A, RPL28, RPL7, RPL7A and RPLP1. Interaction with protein phosphatase 2A occurs most probably through direct binding to the regulatory B56 subunits: PPP2R1B, PPP2R5A, PPP2R5B, PPP2R5C, PPP2R5D, PPP2R5E. Interacts with PPP2R1A and NEK2. Interacts with CDCA8. Ubiquitinated and degraded during mitotic exit by APC/C-Cdh1. In terms of processing, phosphorylation by NEK2 is essential for chromosome congression in mitosis and for the proper attachment of spindle microtubule to the kinetochore. Phosphorylated by PLK1 and AUKRB. In terms of tissue distribution, ubiquitously expressed in proliferating cells. Moderately expressed in the oocytes.

The protein localises to the nucleus. It localises to the chromosome. Its subcellular location is the centromere. The protein resides in the kinetochore. It is found in the cytoplasm. The protein localises to the cytoskeleton. It localises to the spindle pole. Its subcellular location is the microtubule organizing center. The protein resides in the centrosome. It is found in the nucleus speckle. Functionally, plays a central role in chromosome cohesion during mitosis by preventing premature dissociation of cohesin complex from centromeres after prophase, when most of cohesin complex dissociates from chromosomes arms. May act by preventing phosphorylation of the STAG2 subunit of cohesin complex at the centromere, ensuring cohesin persistence at centromere until cohesin cleavage by ESPL1/separase at anaphase. Essential for proper chromosome segregation during mitosis and this function requires interaction with PPP2R1A. Its phosphorylated form is necessary for chromosome congression and for the proper attachment of spindle microtubule to the kinetochore. Necessary for kinetochore localization of PLK1 and CENPF. May play a role in the tension sensing mechanism of the spindle-assembly checkpoint by regulating PLK1 kinetochore affinity. Involved in centromeric enrichment of AUKRB in prometaphase. This Mus musculus (Mouse) protein is Shugoshin 1.